The following is a 492-amino-acid chain: MPSTNPFLTLPYEPAFASLGSEFSDPVEAATFPAHQLRFRNDRLLPILGLDPATVTDEHFIEAFGRFQGRSPLLAMRYHGYQFGIYNPDLGDGRGFLYGQVRGRNGWLYDFGTKGSGRTPYSRGGDGKLTLKGGVREVLASEFLQRLGVRTGRCLSLIETGEELWRGDEPSPTRSSVMVRFNRTHIRFGTFERLHYFKRADLVRQLLDHVIATYYSHLLGDPEADAKFYAELTERTADLAAQWMAAGFCHAVLNTDNLSIVGESFDYGPWAFLDRFDPKFTAAYFDHSGRYRYENQPGICQLNLELLQVPLGMVMSAADLEAGIAGFGDRYQATYSRLMLRRLGFEADQLHSAIADDLIITTLQLLLRAPIGYNEFFARLRAQFQPSWRSDLSAILPDWITTDLEALPEAQWQGWRDRYHQLLTHLPESQLPLIQQQLAQANPEIAPIRPVVESVWDPIAIDDNWEPLEALLNRWRHDGDGAADGVVVPNAN.

The ATP site is built by Gly91, Gly93, Arg94, Lys114, Asp126, Gly127, Arg180, and Arg187. Asp256 functions as the Proton acceptor in the catalytic mechanism. Mg(2+) is bound by residues Asn257 and Asp266. Residue Asp266 participates in ATP binding.

The protein belongs to the SELO family. Mg(2+) is required as a cofactor. Requires Mn(2+) as cofactor.

It catalyses the reaction L-seryl-[protein] + ATP = 3-O-(5'-adenylyl)-L-seryl-[protein] + diphosphate. The catalysed reaction is L-threonyl-[protein] + ATP = 3-O-(5'-adenylyl)-L-threonyl-[protein] + diphosphate. It carries out the reaction L-tyrosyl-[protein] + ATP = O-(5'-adenylyl)-L-tyrosyl-[protein] + diphosphate. The enzyme catalyses L-histidyl-[protein] + UTP = N(tele)-(5'-uridylyl)-L-histidyl-[protein] + diphosphate. It catalyses the reaction L-seryl-[protein] + UTP = O-(5'-uridylyl)-L-seryl-[protein] + diphosphate. The catalysed reaction is L-tyrosyl-[protein] + UTP = O-(5'-uridylyl)-L-tyrosyl-[protein] + diphosphate. Nucleotidyltransferase involved in the post-translational modification of proteins. It can catalyze the addition of adenosine monophosphate (AMP) or uridine monophosphate (UMP) to a protein, resulting in modifications known as AMPylation and UMPylation. In Synechococcus elongatus (strain ATCC 33912 / PCC 7942 / FACHB-805) (Anacystis nidulans R2), this protein is Protein nucleotidyltransferase YdiU.